We begin with the raw amino-acid sequence, 225 residues long: Glutathione S-transferase zeta class (225 aa).

Residues 10–91 (PKLKLYSYFR…YLEEKYPEHP (82 aa)) form the GST N-terminal domain. Glutathione-binding positions include 20-25 (SSCSFR), Q49, V63, 75-76 (DS), Q115, and 119-121 (NLA). The 126-residue stretch at 96 to 221 (DIHKKAINYQ…MPDKQPDSTS (126 aa)) folds into the GST C-terminal domain.

It belongs to the GST superfamily. Zeta family.

The protein localises to the cytoplasm. The enzyme catalyses RX + glutathione = an S-substituted glutathione + a halide anion + H(+). The sequence is that of Glutathione S-transferase zeta class from Euphorbia esula (Leafy spurge).